We begin with the raw amino-acid sequence, 303 residues long: Elongation factor Ts (303 aa).

The tract at residues 80 to 83 is involved in Mg(2+) ion dislocation from EF-Tu; that stretch reads TDFV.

It belongs to the EF-Ts family.

The protein resides in the cytoplasm. Associates with the EF-Tu.GDP complex and induces the exchange of GDP to GTP. It remains bound to the aminoacyl-tRNA.EF-Tu.GTP complex up to the GTP hydrolysis stage on the ribosome. The sequence is that of Elongation factor Ts from Clostridium perfringens (strain SM101 / Type A).